A 347-amino-acid polypeptide reads, in one-letter code: Protein pelota homolog (347 aa).

It belongs to the eukaryotic release factor 1 family. Pelota subfamily. In terms of assembly, monomer. A divalent metal cation serves as cofactor.

Its subcellular location is the cytoplasm. Functionally, may function in recognizing stalled ribosomes, interact with stem-loop structures in stalled mRNA molecules, and effect endonucleolytic cleavage of the mRNA. May play a role in the release non-functional ribosomes and degradation of damaged mRNAs. Has endoribonuclease activity. The chain is Protein pelota homolog from Methanothrix thermoacetophila (strain DSM 6194 / JCM 14653 / NBRC 101360 / PT) (Methanosaeta thermophila).